Here is a 337-residue protein sequence, read N- to C-terminus: Ribosomal RNA small subunit methyltransferase H (337 aa).

S-adenosyl-L-methionine is bound by residues 45–47 (GGH), Asp-64, Phe-91, Asp-120, and Gln-127.

This sequence belongs to the methyltransferase superfamily. RsmH family.

It localises to the cytoplasm. It carries out the reaction cytidine(1402) in 16S rRNA + S-adenosyl-L-methionine = N(4)-methylcytidine(1402) in 16S rRNA + S-adenosyl-L-homocysteine + H(+). Functionally, specifically methylates the N4 position of cytidine in position 1402 (C1402) of 16S rRNA. The sequence is that of Ribosomal RNA small subunit methyltransferase H from Corynebacterium glutamicum (strain ATCC 13032 / DSM 20300 / JCM 1318 / BCRC 11384 / CCUG 27702 / LMG 3730 / NBRC 12168 / NCIMB 10025 / NRRL B-2784 / 534).